A 349-amino-acid polypeptide reads, in one-letter code: Defect at low temperature protein 1 (349 aa).

The Cytoplasmic segment spans residues 1 to 18; the sequence is MPIIDFEIWKLWLFRSIK. A helical transmembrane segment spans residues 19 to 39; that stretch reads AIVIIFLVGFSIVLPVDSIVQ. The Extracellular segment spans residues 40-49; sequence AAESSNTALN. Residues 50–70 form a helical membrane-spanning segment; sequence TFIVVGALVAFGLVSIIIIVG. Residues 71-349 are Cytoplasmic-facing; the sequence is RIIFCRSCIQ…ADSFKYVTHR (279 aa). A disordered region spans residues 312-333; it reads VPTNPEEEHKMALDPQDPVSHK.

Belongs to the DLT1 family.

The protein localises to the membrane. In terms of biological role, required for growth under high-pressure and low-temperature conditions. The protein is Defect at low temperature protein 1 (DLT1) of Zygosaccharomyces rouxii (strain ATCC 2623 / CBS 732 / NBRC 1130 / NCYC 568 / NRRL Y-229).